The following is a 285-amino-acid chain: Lipoyl synthase (285 aa).

Positions 36, 41, 47, 62, 66, 69, and 275 each coordinate [4Fe-4S] cluster. Residues 48 to 264 form the Radical SAM core domain; it reads FSKKTATFLI…KEYAISIGFK (217 aa).

The protein belongs to the radical SAM superfamily. Lipoyl synthase family. [4Fe-4S] cluster serves as cofactor.

Its subcellular location is the cytoplasm. It carries out the reaction [[Fe-S] cluster scaffold protein carrying a second [4Fe-4S](2+) cluster] + N(6)-octanoyl-L-lysyl-[protein] + 2 oxidized [2Fe-2S]-[ferredoxin] + 2 S-adenosyl-L-methionine + 4 H(+) = [[Fe-S] cluster scaffold protein] + N(6)-[(R)-dihydrolipoyl]-L-lysyl-[protein] + 4 Fe(3+) + 2 hydrogen sulfide + 2 5'-deoxyadenosine + 2 L-methionine + 2 reduced [2Fe-2S]-[ferredoxin]. It participates in protein modification; protein lipoylation via endogenous pathway; protein N(6)-(lipoyl)lysine from octanoyl-[acyl-carrier-protein]: step 2/2. Catalyzes the radical-mediated insertion of two sulfur atoms into the C-6 and C-8 positions of the octanoyl moiety bound to the lipoyl domains of lipoate-dependent enzymes, thereby converting the octanoylated domains into lipoylated derivatives. The sequence is that of Lipoyl synthase from Caldicellulosiruptor saccharolyticus (strain ATCC 43494 / DSM 8903 / Tp8T 6331).